Consider the following 201-residue polypeptide: Large ribosomal subunit protein uL4 (201 aa).

The disordered stretch occupies residues 43–69 (TKAQKGRSDVSGGGAKPWKQKGSGRAR).

The protein belongs to the universal ribosomal protein uL4 family. In terms of assembly, part of the 50S ribosomal subunit.

Functionally, one of the primary rRNA binding proteins, this protein initially binds near the 5'-end of the 23S rRNA. It is important during the early stages of 50S assembly. It makes multiple contacts with different domains of the 23S rRNA in the assembled 50S subunit and ribosome. Its function is as follows. Forms part of the polypeptide exit tunnel. The sequence is that of Large ribosomal subunit protein uL4 from Thioalkalivibrio sulfidiphilus (strain HL-EbGR7).